We begin with the raw amino-acid sequence, 330 residues long: ADP-L-glycero-D-manno-heptose-6-epimerase (330 aa).

NADP(+) is bound by residues 11–12 (FI), 32–33 (DN), K39, K54, 75–79 (EGACS), and N92. Catalysis depends on Y139, which acts as the Proton acceptor. An NADP(+)-binding site is contributed by K143. N168 is a substrate binding site. 2 residues coordinate NADP(+): V169 and K177. K177 serves as the catalytic Proton acceptor. Residues R179, H186, 200–203 (FGEY), R213, and Y292 contribute to the substrate site.

The protein belongs to the NAD(P)-dependent epimerase/dehydratase family. HldD subfamily. In terms of assembly, homopentamer. NADP(+) serves as cofactor.

It catalyses the reaction ADP-D-glycero-beta-D-manno-heptose = ADP-L-glycero-beta-D-manno-heptose. The protein operates within nucleotide-sugar biosynthesis; ADP-L-glycero-beta-D-manno-heptose biosynthesis; ADP-L-glycero-beta-D-manno-heptose from D-glycero-beta-D-manno-heptose 7-phosphate: step 4/4. In terms of biological role, catalyzes the interconversion between ADP-D-glycero-beta-D-manno-heptose and ADP-L-glycero-beta-D-manno-heptose via an epimerization at carbon 6 of the heptose. This is ADP-L-glycero-D-manno-heptose-6-epimerase from Paraburkholderia xenovorans (strain LB400).